The sequence spans 219 residues: Protein-L-isoaspartate O-methyltransferase 2 (219 aa).

Ser67 is a catalytic residue.

It belongs to the methyltransferase superfamily. L-isoaspartyl/D-aspartyl protein methyltransferase family.

Its subcellular location is the cytoplasm. It carries out the reaction [protein]-L-isoaspartate + S-adenosyl-L-methionine = [protein]-L-isoaspartate alpha-methyl ester + S-adenosyl-L-homocysteine. In terms of biological role, catalyzes the methyl esterification of L-isoaspartyl residues in peptides and proteins that result from spontaneous decomposition of normal L-aspartyl and L-asparaginyl residues. It plays a role in the repair and/or degradation of damaged proteins. The protein is Protein-L-isoaspartate O-methyltransferase 2 of Nitrosococcus oceani (strain ATCC 19707 / BCRC 17464 / JCM 30415 / NCIMB 11848 / C-107).